Here is a 398-residue protein sequence, read N- to C-terminus: 2-amino-3-ketobutyrate coenzyme A ligase (398 aa).

Cysteine 111–phenylalanine 112 provides a ligand contact to pyridoxal 5'-phosphate. Residue histidine 136 participates in substrate binding. Pyridoxal 5'-phosphate contacts are provided by residues serine 185, aspartate 210–histidine 213, threonine 241–lysine 244, and serine 274–asparagine 275. The residue at position 244 (lysine 244) is an N6-(pyridoxal phosphate)lysine. Position 368 (arginine 368) interacts with substrate.

This sequence belongs to the class-II pyridoxal-phosphate-dependent aminotransferase family. Homodimer. Pyridoxal 5'-phosphate serves as cofactor.

The catalysed reaction is glycine + acetyl-CoA = (2S)-2-amino-3-oxobutanoate + CoA. It functions in the pathway amino-acid degradation; L-threonine degradation via oxydo-reductase pathway; glycine from L-threonine: step 2/2. Functionally, catalyzes the cleavage of 2-amino-3-ketobutyrate to glycine and acetyl-CoA. This is 2-amino-3-ketobutyrate coenzyme A ligase from Escherichia coli (strain K12).